The chain runs to 1606 residues: Fatty acid synthase apf5 (1606 aa).

The Carrier domain maps to Val142–Gln218. Ser177 bears the O-(pantetheine 4'-phosphoryl)serine mark. Residues Lys996–His1539 form the Ketosynthase family 3 (KS3) domain. Catalysis depends on for beta-ketoacyl synthase activity residues Cys1182, His1424, and His1465.

The protein belongs to the thiolase-like superfamily. Fungal fatty acid synthetase subunit alpha family.

It carries out the reaction a fatty acyl-[ACP] + malonyl-[ACP] + H(+) = a 3-oxoacyl-[ACP] + holo-[ACP] + CO2. Its pathway is secondary metabolite biosynthesis. Its function is as follows. Fatty acid synthase; part of the gene cluster that mediates the biosynthesis of the cyclic tetrapeptide apicidin F (APF). The non-ribosomal peptide synthetase apf1 incorporates four different amino acids to produce apicidin F: L-phenylalanine, D-pipecolic acid (D-pip), N-methoxy-L-tryptophan and L-2-aminooctanedioic acid. L-Phenylalanine is the only proteinogenic amino acid directly used by apf1. The 3 other apf1 substrates are non-proteinogenic and have to be modified by other enzymes of the cluster. Lysine is converted to delta-1-pyrroline-5-carboxylate (P5C) which is reduced to L-pipecolic acid (L-pip) by apf3. L-pip is epimerized to D-pip, probably by apf1 activity, prior to incorporation. L-Tryptophan is N-oxidyzed by one of the cytochrome P450 monooxygenases (apf7 or apf8), and further methylated at the hydroxy group by the O-methyltransferase apf6 to yield N-methoxy-L-tryptophan. The synthesis of the fourth apf1 substrate is more complex. The fatty acid synthase apf5 is involved in the synthesis of the octanoic acid backbone of L-2-aminooctanedioic acid by fixing one acetyl-CoA unit and three malonyl-CoA units. Then one of the cytochrome P450 monooxygenases (apf7 or apf8) may oxidize this backbone to 2-oxooctanoic acid. The aminotransferase apf4 is predicted to catalyze the exchange of the keto group with an amino group. The next step would be the oxidation of 2-aminooctanoic acid by one of the cytochrome P450 monooxygenases (apf7 or apf8). The last step is the oxidation of 2-amino-8-hydroxyoctanoic acid to 2-aminooctanedioic acid is catalyzed by the FAD-dependent monooxygenase apf9. In Gibberella fujikuroi (strain CBS 195.34 / IMI 58289 / NRRL A-6831) (Bakanae and foot rot disease fungus), this protein is Fatty acid synthase apf5.